Reading from the N-terminus, the 189-residue chain is ATP-dependent protease subunit HslV (189 aa).

Residue T12 is part of the active site. Residues S172, C175, and T178 each coordinate Na(+).

Belongs to the peptidase T1B family. HslV subfamily. As to quaternary structure, a double ring-shaped homohexamer of HslV is capped on each side by a ring-shaped HslU homohexamer. The assembly of the HslU/HslV complex is dependent on binding of ATP.

It localises to the cytoplasm. The catalysed reaction is ATP-dependent cleavage of peptide bonds with broad specificity.. With respect to regulation, allosterically activated by HslU binding. Protease subunit of a proteasome-like degradation complex believed to be a general protein degrading machinery. The protein is ATP-dependent protease subunit HslV of Ehrlichia chaffeensis (strain ATCC CRL-10679 / Arkansas).